Reading from the N-terminus, the 1038-residue chain is SEH-associated protein 4 (1038 aa).

Residues 50-90 (KDFGSITCLDYSESEIGMIGVGEKNGYLRIFNISGQNSSSP) form a WD 1 repeat. Phosphoserine is present on residues serine 123 and serine 136. WD repeat units lie at residues 147–189 (KKQR…DSHE), 235–276 (QHPT…DQAS), and 544–587 (NTWR…SNQD).

This sequence belongs to the WD repeat mio family. In terms of assembly, component of the SEA complex composed of at least IML1/SEA1, RTC1/SEA2, MTC5/SEA3, NPR2, NPR3, SEA4, SEC13 and SEH1.

It is found in the cytoplasm. The protein resides in the vacuole membrane. Its function is as follows. Component of the SEA complex which coats the vacuolar membrane and is involved in intracellular trafficking, autophagy, response to nitrogen starvation, and amino acid biogenesis. The sequence is that of SEH-associated protein 4 (SEA4) from Saccharomyces cerevisiae (strain ATCC 204508 / S288c) (Baker's yeast).